The sequence spans 165 residues: Protein YELLOW LEAF 1, choloroplastic (165 aa).

The transit peptide at 1-51 (MPPLATMSSPGSLLLLTPAVYQGIGRNRGGQSQEGQSISSSRSLKTKLSVS) directs the protein to the chloroplast. Residues 71–118 (TQTARRKSFSGPTSPPSGSVKEKVRSPKLDDGGTGFPPFRFGGGGGGG) are disordered. Over residues 79–89 (FSGPTSPPSGS) the composition is skewed to low complexity. Basic and acidic residues predominate over residues 90 to 101 (VKEKVRSPKLDD).

As to quaternary structure, interacts with atpB. As to expression, highly expressed in leaves. Expressed in leaf sheaths. Expressed at low levels in stems.

It localises to the plastid. It is found in the chloroplast. Its function is as follows. Required for photosynthetic protein complex assembly in chloroplast thylakoid membranes during leaf development. Maintains the abundance of the core protein complex PsaA-PsaB of photosystem I (PSI) in the thylakoid membrane. May play a role in the efficient biogenesis of the chloroplast ATP synthase complex, possibly by interacting with the beta subunit atpB. The sequence is that of Protein YELLOW LEAF 1, choloroplastic from Oryza sativa subsp. japonica (Rice).